A 137-amino-acid polypeptide reads, in one-letter code: Nucleoside diphosphate kinase (137 aa).

ATP contacts are provided by lysine 9, phenylalanine 57, arginine 85, threonine 91, arginine 102, and asparagine 112. The Pros-phosphohistidine intermediate role is filled by histidine 115.

Belongs to the NDK family. Homotetramer. Mg(2+) serves as cofactor.

Its subcellular location is the cytoplasm. The catalysed reaction is a 2'-deoxyribonucleoside 5'-diphosphate + ATP = a 2'-deoxyribonucleoside 5'-triphosphate + ADP. It carries out the reaction a ribonucleoside 5'-diphosphate + ATP = a ribonucleoside 5'-triphosphate + ADP. Major role in the synthesis of nucleoside triphosphates other than ATP. The ATP gamma phosphate is transferred to the NDP beta phosphate via a ping-pong mechanism, using a phosphorylated active-site intermediate. This chain is Nucleoside diphosphate kinase, found in Aliarcobacter butzleri (strain RM4018) (Arcobacter butzleri).